Here is a 253-residue protein sequence, read N- to C-terminus: Bridging integrator 3 (253 aa).

The 224-residue stretch at 9-232 folds into the BAR domain; it reads GQPKKQIVSK…LDQPGHSDEQ (224 aa). Coiled coils occupy residues 16-57 and 120-151; these read VSKT…AMSK and SLNM…KEKT. Residues 222–241 form a disordered region; the sequence is QLDQPGHSDEQRERENETKL. The span at 227 to 241 shows a compositional bias: basic and acidic residues; sequence GHSDEQRERENETKL.

The protein localises to the cytoplasm. It localises to the cytoskeleton. Its function is as follows. Involved in cytokinesis and septation where it has a role in the localization of F-actin. The sequence is that of Bridging integrator 3 (Bin3) from Mus musculus (Mouse).